Consider the following 199-residue polypeptide: uncharacterized protein (199 aa).

This is an uncharacterized protein from Borreliella burgdorferi (strain ATCC 35210 / DSM 4680 / CIP 102532 / B31) (Borrelia burgdorferi).